The following is a 714-amino-acid chain: Fatty acid oxidation complex subunit alpha (714 aa).

The interval 1 to 190 (MEMASAFTLN…KLGLVDDVVP (190 aa)) is enoyl-CoA hydratase. The segment at 306–714 (APLNSVGILG…FWKTTATDLQ (409 aa)) is 3-hydroxyacyl-CoA dehydrogenase.

It in the N-terminal section; belongs to the enoyl-CoA hydratase/isomerase family. The protein in the central section; belongs to the 3-hydroxyacyl-CoA dehydrogenase family. Heterotetramer of two alpha chains (FadJ) and two beta chains (FadI).

It localises to the cytoplasm. It catalyses the reaction a (3S)-3-hydroxyacyl-CoA = a (2E)-enoyl-CoA + H2O. The enzyme catalyses a 4-saturated-(3S)-3-hydroxyacyl-CoA = a (3E)-enoyl-CoA + H2O. It carries out the reaction a (3S)-3-hydroxyacyl-CoA + NAD(+) = a 3-oxoacyl-CoA + NADH + H(+). The catalysed reaction is (3S)-3-hydroxybutanoyl-CoA = (3R)-3-hydroxybutanoyl-CoA. The protein operates within lipid metabolism; fatty acid beta-oxidation. In terms of biological role, catalyzes the formation of a hydroxyacyl-CoA by addition of water on enoyl-CoA. Also exhibits 3-hydroxyacyl-CoA epimerase and 3-hydroxyacyl-CoA dehydrogenase activities. This is Fatty acid oxidation complex subunit alpha from Shigella boydii serotype 4 (strain Sb227).